A 379-amino-acid polypeptide reads, in one-letter code: tRNA-specific 2-thiouridylase MnmA (379 aa).

ATP contacts are provided by residues 23 to 30 (AMSGGVDS) and Leu49. Cys117 acts as the Nucleophile in catalysis. Cysteines 117 and 214 form a disulfide. Residue Gly141 coordinates ATP. An interaction with tRNA region spans residues 163–165 (RDQ). Cys214 functions as the Cysteine persulfide intermediate in the catalytic mechanism.

This sequence belongs to the MnmA/TRMU family.

Its subcellular location is the cytoplasm. It catalyses the reaction S-sulfanyl-L-cysteinyl-[protein] + uridine(34) in tRNA + AH2 + ATP = 2-thiouridine(34) in tRNA + L-cysteinyl-[protein] + A + AMP + diphosphate + H(+). Its function is as follows. Catalyzes the 2-thiolation of uridine at the wobble position (U34) of tRNA, leading to the formation of s(2)U34. The sequence is that of tRNA-specific 2-thiouridylase MnmA from Cereibacter sphaeroides (strain KD131 / KCTC 12085) (Rhodobacter sphaeroides).